The chain runs to 242 residues: Ribonuclease 3 2 (242 aa).

Residues 12–137 (LESLVRKLGL…VLGALYLSTS (126 aa)) form the RNase III domain. Position 51 (Glu51) interacts with Mg(2+). Asp55 is a catalytic residue. Positions 123 and 126 each coordinate Mg(2+). Glu126 is an active-site residue. The region spanning 165–235 (NYKAALQEWT…AKVAFLAITP (71 aa)) is the DRBM domain.

Belongs to the ribonuclease III family. In terms of assembly, homodimer. The cofactor is Mg(2+).

It localises to the cytoplasm. The enzyme catalyses Endonucleolytic cleavage to 5'-phosphomonoester.. Functionally, digests double-stranded RNA. Involved in the processing of primary rRNA transcript to yield the immediate precursors to the large and small rRNAs (23S and 16S). Processes some mRNAs, and tRNAs when they are encoded in the rRNA operon. Processes pre-crRNA and tracrRNA of type II CRISPR loci if present in the organism. The polypeptide is Ribonuclease 3 2 (rnc2) (Nostoc sp. (strain PCC 7120 / SAG 25.82 / UTEX 2576)).